A 104-amino-acid chain; its full sequence is NADH-quinone oxidoreductase subunit K (104 aa).

A run of 3 helical transmembrane segments spans residues 4–24 (VPASAYLTLAIILFCIGLFGA), 31–51 (VIVLVCIELMLNAANLNLVAF), and 67–87 (LFTMAVAAAEAAVGLAILIAL).

This sequence belongs to the complex I subunit 4L family. As to quaternary structure, NDH-1 is composed of 14 different subunits. Subunits NuoA, H, J, K, L, M, N constitute the membrane sector of the complex.

It is found in the cell membrane. It carries out the reaction a quinone + NADH + 5 H(+)(in) = a quinol + NAD(+) + 4 H(+)(out). Its function is as follows. NDH-1 shuttles electrons from NADH, via FMN and iron-sulfur (Fe-S) centers, to quinones in the respiratory chain. The immediate electron acceptor for the enzyme in this species is believed to be a menaquinone. Couples the redox reaction to proton translocation (for every two electrons transferred, four hydrogen ions are translocated across the cytoplasmic membrane), and thus conserves the redox energy in a proton gradient. In Bacillus cereus (strain G9842), this protein is NADH-quinone oxidoreductase subunit K.